The primary structure comprises 186 residues: Ribosome-recycling factor (186 aa).

Basic and acidic residues-rich tracts occupy residues 134–169 and 176–186; these read RDANKAAETAEKDKEMTEDDRDKTKDQVQELTKKAE and AKAREAEVMED. Residues 134–186 are disordered; the sequence is RDANKAAETAEKDKEMTEDDRDKTKDQVQELTKKAETNVNESAKAREAEVMED.

Belongs to the RRF family.

The protein localises to the cytoplasm. Its function is as follows. Responsible for the release of ribosomes from messenger RNA at the termination of protein biosynthesis. May increase the efficiency of translation by recycling ribosomes from one round of translation to another. In Rhodopirellula baltica (strain DSM 10527 / NCIMB 13988 / SH1), this protein is Ribosome-recycling factor.